The sequence spans 727 residues: Synaptic vesicle glycoprotein 2C (727 aa).

Residues 1–57 form an interaction with SYT1 region; that stretch reads MEDSYKDRTSLMKGAKDIAKEVKKQTVKKVNQAVDRAQDEYTQRSYSRFQDEDDDDD. The Cytoplasmic portion of the chain corresponds to 1-154; the sequence is MEDSYKDRTS…CGHGRFQWAL (154 aa). The segment at 22–120 is disordered; sequence VKKQTVKKVN…QPKGDEYKDR (99 aa). 2 positions are modified to phosphoserine: serine 75 and serine 76. Threonine 79 carries the post-translational modification Phosphothreonine. A helical membrane pass occupies residues 155–175; it reads FFVLGMALMADGVEVFVVGFV. At 176–191 the chain is on the extracellular side; it reads LPSAETDLCIPNSGSG. A helical membrane pass occupies residues 192–212; the sequence is WLGSIVYLGMMVGAFFWGGLA. Residues 213 to 226 lie on the Cytoplasmic side of the membrane; that stretch reads DKVGRKQSLLICMS. A helical transmembrane segment spans residues 227–247; sequence VNGFFAFLSSFVQGYGFFLLC. Residue arginine 248 is a topological domain, extracellular. A helical membrane pass occupies residues 249-269; that stretch reads LLSGFGIGGAIPTVFSYFAEV. Over 270–280 the chain is Cytoplasmic; the sequence is LAREKRGEHLS. Residues 281–301 form a helical membrane-spanning segment; it reads WLCMFWMIGGIYASAMAWAII. The Extracellular segment spans residues 302 to 320; sequence PHYGWSFSMGSAYQFHSWR. The chain crosses the membrane as a helical span at residues 321-341; sequence VFVIVCALPCVSSVVALTFMP. At 342 to 437 the chain is on the cytoplasmic side; the sequence is ESPRFLLEVG…PVRENTIKLT (96 aa). The helical transmembrane segment at 438 to 458 threads the bilayer; sequence IVWFTLSFGYYGLSVWFPDVI. Topologically, residues 459–578 are extracellular; that stretch reads KHLQSDEYAL…CQITFDDDYS (120 aa). Tyrosine 466 is modified (phosphotyrosine). Asparagine 480, asparagine 484, asparagine 534, asparagine 559, and asparagine 565 each carry an N-linked (GlcNAc...) asparagine glycan. A (Microbial infection) C.botulinum neurotoxin type A-binding region spans residues 529 to 566; sequence NTYFKNCTFIDTLFENTDFEPYKFIDSEFQNCSFLHNK. A helical membrane pass occupies residues 579–599; that stretch reads AYWIYFVNFLGTLAVLPGNIV. Over 600-609 the chain is Cytoplasmic; that stretch reads SALLMDRIGR. The helical transmembrane segment at 610–630 threads the bilayer; the sequence is LTMLGGSMVLSGISCFFLWFG. The Extracellular segment spans residues 631-636; sequence TSESMM. Residues 637–657 form a helical membrane-spanning segment; the sequence is IGMLCLYNGLTISAWNSLDVV. Residues 658-670 are Cytoplasmic-facing; that stretch reads TVELYPTDRRATG. A helical transmembrane segment spans residues 671–693; the sequence is FGFLNALCKAAAVLGNLIFGSLV. Residues 694-697 are Extracellular-facing; that stretch reads SITK. Residues 698 to 716 form a helical membrane-spanning segment; it reads AIPILLASTVLVCGGLVGL. The Cytoplasmic segment spans residues 717–727; the sequence is RLPDTRTQVLM.

Belongs to the major facilitator superfamily. In terms of assembly, interacts with SYT1 in a calcium-dependent manner. (Microbial infection) Interacts with C.botulinum neurotoxin type A (BoNT/A, botA). As to quaternary structure, (Microbial infection) Interacts with C.botulinum neurotoxin type F (BoNT/F). Interaction requires glycosylation of SV2 proteins. Post-translationally, N-glycosylated. Expressed at high levels in very few brain areas including the striatum, midbrain and hindbrain, and in the olfactory bulb. Expressed at lower levels in cerebrum, hippocampus and cerebellum (at protein level). Mainly expressed in brain; also detected in lung, liver, kidney.

The protein localises to the cytoplasmic vesicle. It is found in the secretory vesicle. The protein resides in the synaptic vesicle membrane. Its function is as follows. Plays a role in the control of regulated secretion in neural and endocrine cells, enhancing selectively low-frequency neurotransmission. Positively regulates vesicle fusion by maintaining the readily releasable pool of secretory vesicles. (Microbial infection) Receptor for C.botulinum neurotoxin type A (BoNT/A, botA); the toxin binds Sv2c via extracellular loop 4. Restores uptake of BoNT/A in rat cells that are deleted for SV2 receptor. In terms of biological role, (Microbial infection) Possible receptor for C.botulinum neurotoxin type D (BoNT/D, botD); BoNT/D does not bind to extracellular loop 4 as do BoNT/A and BoNT/E. Another group does not find a convincing interaction with SV2. Functionally, (Microbial infection) Receptor for C.botulinum neurotoxin type F (BoNT/F); binding requires glycosylation of Asn-573. The protein is Synaptic vesicle glycoprotein 2C (Sv2c) of Rattus norvegicus (Rat).